Reading from the N-terminus, the 444-residue chain is 23S rRNA (uracil(1939)-C(5))-methyltransferase RlmD (444 aa).

The TRAM domain occupies 5-67 (RNRLDRTPFQ…RHFDEAKTVG (63 aa)). Residues Cys-80, Cys-86, Cys-89, and Cys-168 each contribute to the [4Fe-4S] cluster site. Residues Gln-276, Phe-305, Asn-310, Glu-326, Asp-353, and Asp-374 each coordinate S-adenosyl-L-methionine. Cys-400 functions as the Nucleophile in the catalytic mechanism.

The protein belongs to the class I-like SAM-binding methyltransferase superfamily. RNA M5U methyltransferase family. RlmD subfamily.

It catalyses the reaction uridine(1939) in 23S rRNA + S-adenosyl-L-methionine = 5-methyluridine(1939) in 23S rRNA + S-adenosyl-L-homocysteine + H(+). Its function is as follows. Catalyzes the formation of 5-methyl-uridine at position 1939 (m5U1939) in 23S rRNA. The protein is 23S rRNA (uracil(1939)-C(5))-methyltransferase RlmD of Xanthomonas axonopodis pv. citri (strain 306).